Consider the following 895-residue polypeptide: Protein translocase subunit SecA (895 aa).

ATP-binding positions include glutamine 90, 108 to 112 (GEGKS), and aspartate 498.

The protein belongs to the SecA family.

It localises to the plastid. It is found in the chloroplast stroma. The protein resides in the chloroplast thylakoid membrane. The enzyme catalyses ATP + H2O + cellular proteinSide 1 = ADP + phosphate + cellular proteinSide 2.. Its function is as follows. Has a central role in coupling the hydrolysis of ATP to the transfer of proteins across the thylakoid membrane. This is Protein translocase subunit SecA from Cyanidium caldarium (Red alga).